A 637-amino-acid chain; its full sequence is Limonene/alpha-pinene synthase, chloroplastic (637 aa).

Residues 1-56 (MALLSIVSLQVPKSCGLKSLISSSNVQKALCISTAVPTLRMRRRQKALVINMKLTT) constitute a chloroplast transit peptide. Positions 388, 392, and 540 each coordinate Mg(2+). The DDXXD motif motif lies at 388–392 (DDMYD).

This sequence belongs to the terpene synthase family. Tpsd subfamily. It depends on Mg(2+) as a cofactor. Requires Mn(2+) as cofactor. The cofactor is K(+).

It is found in the plastid. It localises to the chloroplast. It catalyses the reaction (2E)-geranyl diphosphate = (4S)-limonene + diphosphate. The enzyme catalyses (2E)-geranyl diphosphate = (1S,5S)-alpha-pinene + diphosphate. It functions in the pathway terpene metabolism; oleoresin biosynthesis. Involved in defensive oleoresin formation in conifers in response to insect attack or other injury. Involved in monoterpene (C10) olefins biosynthesis. The chain is Limonene/alpha-pinene synthase, chloroplastic (ag11) from Abies grandis (Grand fir).